The sequence spans 157 residues: Catabolic 3-dehydroquinase (157 aa).

Y27 acts as the Proton acceptor in catalysis. Residues N80, H86, and D93 each coordinate substrate. Catalysis depends on H106, which acts as the Proton donor. Residues 107-108 and R117 each bind substrate; that span reads VS.

Belongs to the type-II 3-dehydroquinase family. Homododecamer. Adopts a ring-like structure, composed of an arrangement of two hexameric rings stacked on top of one another.

It carries out the reaction 3-dehydroquinate = 3-dehydroshikimate + H2O. It functions in the pathway aromatic compound metabolism; 3,4-dihydroxybenzoate biosynthesis; 3,4-dihydroxybenzoate from 3-dehydroquinate: step 1/2. In terms of biological role, is involved in the catabolism of quinate. Allows the utilization of quinate as carbon source via the beta-ketoadipate pathway. This is Catabolic 3-dehydroquinase from Pyricularia oryzae (strain 70-15 / ATCC MYA-4617 / FGSC 8958) (Rice blast fungus).